Reading from the N-terminus, the 282-residue chain is NADPH-dependent 7-cyano-7-deazaguanine reductase (282 aa).

88 to 90 (IES) is a substrate binding site. 90–91 (SK) is an NADPH binding site. Cys-190 (thioimide intermediate) is an active-site residue. Residue Asp-197 is the Proton donor of the active site. 229–230 (HE) provides a ligand contact to substrate. 258–259 (RG) lines the NADPH pocket.

It belongs to the GTP cyclohydrolase I family. QueF type 2 subfamily. Homodimer.

The protein resides in the cytoplasm. It catalyses the reaction 7-aminomethyl-7-carbaguanine + 2 NADP(+) = 7-cyano-7-deazaguanine + 2 NADPH + 3 H(+). The protein operates within tRNA modification; tRNA-queuosine biosynthesis. Functionally, catalyzes the NADPH-dependent reduction of 7-cyano-7-deazaguanine (preQ0) to 7-aminomethyl-7-deazaguanine (preQ1). This chain is NADPH-dependent 7-cyano-7-deazaguanine reductase, found in Salmonella paratyphi C (strain RKS4594).